The sequence spans 213 residues: Protein Tpen_0748 (213 aa).

The region spanning 7–207 (EEGALLVRLA…ETTPKGDVVE (201 aa)) is the AMMECR1 domain.

This Thermofilum pendens (strain DSM 2475 / Hrk 5) protein is Protein Tpen_0748.